Reading from the N-terminus, the 125-residue chain is Histone H2A (125 aa).

Over residues 1–18 the composition is skewed to basic residues; the sequence is MSGRGKGGKVKGKSKTRS. Positions 1–23 are disordered; that stretch reads MSGRGKGGKVKGKSKTRSSRAGL. Ser-2 bears the N-acetylserine mark. At Gln-104 the chain carries N5-methylglutamine.

This sequence belongs to the histone H2A family. In terms of assembly, the nucleosome is a histone octamer containing two molecules each of H2A, H2B, H3 and H4 assembled in one H3-H4 heterotetramer and two H2A-H2B heterodimers. The octamer wraps approximately 147 bp of DNA.

The protein resides in the nucleus. It is found in the chromosome. Functionally, core component of nucleosome. Nucleosomes wrap and compact DNA into chromatin, limiting DNA accessibility to the cellular machineries which require DNA as a template. Histones thereby play a central role in transcription regulation, DNA repair, DNA replication and chromosomal stability. DNA accessibility is regulated via a complex set of post-translational modifications of histones, also called histone code, and nucleosome remodeling. The sequence is that of Histone H2A from Sepia officinalis (Common cuttlefish).